Consider the following 438-residue polypeptide: Glycerol-3-phosphate acyltransferase 3 (438 aa).

A helical membrane pass occupies residues 14 to 34; the sequence is WLTLVGGLILLPSAFGLSLGI. Phosphoserine is present on residues S68 and S77. 2 helical membrane passes run 137–157 and 161–181; these read ISPR…CFLL and VTLA…VGQL. Positions 229–234 match the HXXXXD motif motif; sequence HTSPID.

Belongs to the 1-acyl-sn-glycerol-3-phosphate acyltransferase family. In terms of tissue distribution, most abundant in epididymal fat, followed by small intestine, brown adipose tissue, kidney, heart and colon.

Its subcellular location is the endoplasmic reticulum membrane. It carries out the reaction sn-glycerol 3-phosphate + an acyl-CoA = a 1-acyl-sn-glycero-3-phosphate + CoA. The catalysed reaction is a 1-acyl-sn-glycero-3-phosphate + an acyl-CoA = a 1,2-diacyl-sn-glycero-3-phosphate + CoA. It catalyses the reaction dodecanoyl-CoA + sn-glycerol 3-phosphate = 1-dodecanoyl-sn-glycerol 3-phosphate + CoA. The enzyme catalyses sn-glycerol 3-phosphate + hexadecanoyl-CoA = 1-hexadecanoyl-sn-glycero-3-phosphate + CoA. It carries out the reaction sn-glycerol 3-phosphate + (9Z)-octadecenoyl-CoA = 1-(9Z-octadecenoyl)-sn-glycero-3-phosphate + CoA. The catalysed reaction is (9Z,12Z)-octadecadienoyl-CoA + sn-glycerol 3-phosphate = 1-(9Z,12Z)-octadecadienoyl-sn-glycero-3-phosphate + CoA. It catalyses the reaction 1-tetradecanoyl-sn-glycerol 3-phosphate + (9Z)-octadecenoyl-CoA = 1-tetradecanoyl-2-(9Z)-octadecenoyl-sn-glycero-3-phosphate + CoA. The enzyme catalyses 1-hexadecanoyl-sn-glycero-3-phosphate + (9Z)-octadecenoyl-CoA = 1-hexadecanoyl-2-(9Z-octadecenoyl)-sn-glycero-3-phosphate + CoA. It carries out the reaction 1-(9Z-octadecenoyl)-sn-glycero-3-phosphate + (9Z)-octadecenoyl-CoA = 1,2-di-(9Z-octadecenoyl)-sn-glycero-3-phosphate + CoA. The catalysed reaction is 1-(6Z,9Z,12Z-octadecatrienoyl)-sn-glycero-3-phosphate + (9Z)-octadecenoyl-CoA = (6Z,9Z,12Z)-octadecatrienoyl-2-(9Z)-octadecenoyl-sn-glycero-3-phosphate + CoA. It catalyses the reaction 1-(9Z,12Z,15Z)-octadecatrienoyl-sn-glycero-3-phosphate + (9Z)-octadecenoyl-CoA = 1-(9Z,12Z,15Z)-octadecatrienoyl-2-(9Z)-octadecenoyl-sn-glycero-3-phosphate + CoA. The enzyme catalyses 1-(9Z-octadecenoyl)-sn-glycero-3-phosphate + tetradecanoyl-CoA = 1-(9Z)-octadecenoyl-2-tetradecanoyl-sn-glycero-3-phosphate + CoA. It carries out the reaction 1-(9Z-octadecenoyl)-sn-glycero-3-phosphate + hexadecanoyl-CoA = 1-(9Z)-octadecenoyl-2-hexadecanoyl-sn-glycero-3-phosphate + CoA. The catalysed reaction is 1-(9Z-octadecenoyl)-sn-glycero-3-phosphate + octadecanoyl-CoA = 1-(9Z-octadecenoyl)-2-octadecanoyl-sn-glycero-3-phosphate + CoA. It catalyses the reaction 1-(9Z-octadecenoyl)-sn-glycero-3-phosphate + (9Z,12Z)-octadecadienoyl-CoA = 1-(9Z)-octadecenoyl-2-(9Z,12Z)-octadecadienoyl-sn-glycero-3-phosphate + CoA. The enzyme catalyses 1-(5Z,8Z,11Z,14Z-eicosatetraenoyl)-sn-glycero-3-phosphate + (9Z)-octadecenoyl-CoA = 1-(5Z,8Z,11Z,14Z)-eicosatetraenoyl-2-(9Z)-octadecenoyl-sn-glycero-3-phosphate + CoA. It functions in the pathway glycerolipid metabolism; triacylglycerol biosynthesis. It participates in phospholipid metabolism; CDP-diacylglycerol biosynthesis; CDP-diacylglycerol from sn-glycerol 3-phosphate: step 1/3. Its function is as follows. Converts glycerol-3-phosphate to 1-acyl-sn-glycerol-3-phosphate (lysophosphatidic acid or LPA) by incorporating an acyl moiety at the sn-1 position of the glycerol backbone. Also converts LPA into 1,2-diacyl-sn-glycerol-3-phosphate (phosphatidic acid or PA) by incorporating an acyl moiety at the sn-2 position of the glycerol backbone. Protects cells against lipotoxicity. The chain is Glycerol-3-phosphate acyltransferase 3 from Mus musculus (Mouse).